Reading from the N-terminus, the 576-residue chain is Glutamine-dependent NAD(+) synthetase (576 aa).

The CN hydrolase domain maps to 4 to 246 (LRVTLAQLNP…EEIITVDLDL (243 aa)). E44 (proton acceptor; for glutaminase activity) is an active-site residue. K112 (for glutaminase activity) is an active-site residue. Y118 is a binding site for L-glutamine. C148 (nucleophile; for glutaminase activity) is an active-site residue. S176 and K182 together coordinate L-glutamine. Residues 292–576 (PVREEEMFRA…PITNRFKEPL (285 aa)) form a ligase region. ATP is bound at residue 321–328 (GLSGGMDS). N404 lines the deamido-NAD(+) pocket. T428 is a binding site for ATP. Deamido-NAD(+) is bound by residues E433 and K545.

It in the C-terminal section; belongs to the NAD synthetase family.

It catalyses the reaction deamido-NAD(+) + L-glutamine + ATP + H2O = L-glutamate + AMP + diphosphate + NAD(+) + H(+). Its pathway is cofactor biosynthesis; NAD(+) biosynthesis; NAD(+) from deamido-NAD(+) (L-Gln route): step 1/1. Functionally, catalyzes the ATP-dependent amidation of deamido-NAD to form NAD. Uses L-glutamine as a nitrogen source. The chain is Glutamine-dependent NAD(+) synthetase (nadE2) from Thermotoga maritima (strain ATCC 43589 / DSM 3109 / JCM 10099 / NBRC 100826 / MSB8).